The sequence spans 899 residues: Inositol 1,4,5-triphosphate receptor associated 1 (899 aa).

Disordered stretches follow at residues Pro32–Leu110, Arg164–His286, Lys324–Gly391, and Ala463–Gly486. Basic residues predominate over residues Ser100 to Leu110. Ser106 bears the Phosphoserine mark. An interaction with PRKG1 region spans residues Ser140 to Ser172. Polar residues predominate over residues Ser171–Val180. The segment covering Ser181–Ser203 has biased composition (low complexity). Residues Thr266–Phe281 show a composition bias toward basic and acidic residues. Residues Pro333 to Gln351 show a composition bias toward polar residues. The residue at position 382 (Ser382) is a Phosphoserine. Residues Asn521–Thr567 are interaction with ITPR1. Residues Ser534–Thr632 are a coiled coil. A phosphoserine mark is found at Ser670 and Ser683. Disordered stretches follow at residues Leu695 to Ser722 and Thr757 to Ser818. The segment covering Ala699–Ser715 has biased composition (low complexity). Basic and acidic residues-rich tracts occupy residues Gln759–Tyr770 and Gly777–Leu787. The segment covering Lys788–Lys814 has biased composition (acidic residues). Residues Trp839–Tyr859 form a helical membrane-spanning segment. A disordered region spans residues Glu867–Gln899. Positions Ser876 to Gln892 are enriched in polar residues.

As to quaternary structure, part of cGMP kinase signaling complex at least composed of ACTA2/alpha-actin, CNN1/calponin H1, PLN/phospholamban, PRKG1 and ITPR1. Interacts with PRKG1/cGKI-beta and ITPR1/IP3R type I. Interacts with HCN4; regulates HCN4 channel activity. In terms of processing, phosphorylated by PRKG1/cGKI. Highly expressed in smooth muscle such as aorta, colon and uterus. Detected in the brain, in the thalamus, in the hippocampus and myenteric plexus. Highly expressed in megakaryocytes. Down-regulated during macrophage differentiation.

The protein localises to the membrane. Its subcellular location is the cytoplasm. The protein resides in the perinuclear region. It localises to the sarcoplasmic reticulum. Plays a role as NO/PRKG1-dependent regulator of IP3-induced calcium release; its phosphorylation by PRKG1 inhibits bradykinin and IP3-induced calcium release from intracellular stores. Recruits PRKG1 to the endoplasmic reticulum and may mediate the assembly of PRKG1 and ITPR1 in a macrocomplex. Involved in PRKG1 signaling cascade leading to inhibition of platelet activation and aggregation. Also mediates NO-dependent inhibition of calcium signaling in gastrointestinal smooth muscle contributing to NO-dependent relaxation. Plays a role in the regulation of cellular excitability by regulating the hyperpolarization-activated cyclic nucleotide-gated HCN4 channel activity. The sequence is that of Inositol 1,4,5-triphosphate receptor associated 1 (Irag1) from Mus musculus (Mouse).